Consider the following 740-residue polypeptide: Phosphoribosylformylglycinamidine synthase subunit PurL (740 aa).

H50 is a catalytic residue. ATP is bound by residues Y53 and K92. E94 serves as a coordination point for Mg(2+). Substrate is bound by residues 95-98 (SHNH) and R117. H96 acts as the Proton acceptor in catalysis. D118 serves as a coordination point for Mg(2+). Substrate is bound at residue Q241. D269 contacts Mg(2+). Residue 313–315 (ESQ) participates in substrate binding. 2 residues coordinate ATP: D495 and G532. N533 is a Mg(2+) binding site. S535 serves as a coordination point for substrate.

It belongs to the FGAMS family. As to quaternary structure, monomer. Part of the FGAM synthase complex composed of 1 PurL, 1 PurQ and 2 PurS subunits.

The protein resides in the cytoplasm. It carries out the reaction N(2)-formyl-N(1)-(5-phospho-beta-D-ribosyl)glycinamide + L-glutamine + ATP + H2O = 2-formamido-N(1)-(5-O-phospho-beta-D-ribosyl)acetamidine + L-glutamate + ADP + phosphate + H(+). The protein operates within purine metabolism; IMP biosynthesis via de novo pathway; 5-amino-1-(5-phospho-D-ribosyl)imidazole from N(2)-formyl-N(1)-(5-phospho-D-ribosyl)glycinamide: step 1/2. In terms of biological role, part of the phosphoribosylformylglycinamidine synthase complex involved in the purines biosynthetic pathway. Catalyzes the ATP-dependent conversion of formylglycinamide ribonucleotide (FGAR) and glutamine to yield formylglycinamidine ribonucleotide (FGAM) and glutamate. The FGAM synthase complex is composed of three subunits. PurQ produces an ammonia molecule by converting glutamine to glutamate. PurL transfers the ammonia molecule to FGAR to form FGAM in an ATP-dependent manner. PurS interacts with PurQ and PurL and is thought to assist in the transfer of the ammonia molecule from PurQ to PurL. The polypeptide is Phosphoribosylformylglycinamidine synthase subunit PurL (Brucella canis (strain ATCC 23365 / NCTC 10854 / RM-666)).